A 278-amino-acid chain; its full sequence is MYDLTGKHVCYVADCGGIALETSKVLMTKNIAKLAILQSVENPPAIAQLQSIKHSTQIFFWTFDVTMAREEMKKYFDEVMVQMDYIDVLINGATLCDERNIDATINTNLTGMMNTVATVLPYMDRKMGGSGGLIVNVTSVIGLDPSPVFCAYSASKFGVIGFTRSLADPLYYTQNGVAVMAVCCGPTKVFVDRELTAFLAYGQTFADRLRRAPCQSTAVCGQNIVNAIERSENGQIWIADKGGLESVALHWYWHMADQFVNYMQSTDDEDQEFFLGQR.

Residue Tyr-11–Leu-34 coordinates NAD(+). Ser-139 is a binding site for substrate. Residue Tyr-152 is the Proton acceptor of the active site.

The protein belongs to the short-chain dehydrogenases/reductases (SDR) family.

This is Alcohol dehydrogenase-related 31 kDa protein (Adhr) from Drosophila persimilis (Fruit fly).